The sequence spans 356 residues: MSGKTKRLMVMAAGTGGHVFPGLAVAHHLMAQGWQVRWLGTADRMEASLVPQHGIEIDFIKISGLRGKGLMAQLTAPIRIYRAVRQAQKIMRDYQPNVVLGMGGYVSGPGGLAAWLCGVPVVLHEQNGIAGLTNRWLARIAKKVLQAFPGAFPNADVVGNPVRTDVLALPLPAVRLSGREGPIRVLVIGGSQGARILNQTLPLVAASLGEQITLWHQVGKGALPEVSQAYQQAGQAGHLVVEFIDDMAAAYAWADVVVCRSGALTVSEVAAAGLPAIFVPFQHKDRQQYWNALPLEKAGAAKIIEQPQFTATSVSSLLASWDRATLLSMAERARSVAIPDATERVAAEVVAASKSA.

Residues 15–17, Asn127, Arg163, Ser191, Ile244, 263–268, and Gln288 each bind UDP-N-acetyl-alpha-D-glucosamine; these read TGG and ALTVSE.

The protein belongs to the glycosyltransferase 28 family. MurG subfamily.

The protein localises to the cell inner membrane. The enzyme catalyses di-trans,octa-cis-undecaprenyl diphospho-N-acetyl-alpha-D-muramoyl-L-alanyl-D-glutamyl-meso-2,6-diaminopimeloyl-D-alanyl-D-alanine + UDP-N-acetyl-alpha-D-glucosamine = di-trans,octa-cis-undecaprenyl diphospho-[N-acetyl-alpha-D-glucosaminyl-(1-&gt;4)]-N-acetyl-alpha-D-muramoyl-L-alanyl-D-glutamyl-meso-2,6-diaminopimeloyl-D-alanyl-D-alanine + UDP + H(+). It participates in cell wall biogenesis; peptidoglycan biosynthesis. Its function is as follows. Cell wall formation. Catalyzes the transfer of a GlcNAc subunit on undecaprenyl-pyrophosphoryl-MurNAc-pentapeptide (lipid intermediate I) to form undecaprenyl-pyrophosphoryl-MurNAc-(pentapeptide)GlcNAc (lipid intermediate II). The protein is UDP-N-acetylglucosamine--N-acetylmuramyl-(pentapeptide) pyrophosphoryl-undecaprenol N-acetylglucosamine transferase of Yersinia pestis (strain Pestoides F).